The primary structure comprises 351 residues: 3-dehydroquinate synthase (351 aa).

NAD(+) is bound by residues 60 to 65, 94 to 98, 118 to 119, Lys131, Lys140, and 158 to 161; these read DGEEYK, GVISD, TT, and FLKT. Residues Glu173, His239, and His256 each coordinate Zn(2+).

It belongs to the sugar phosphate cyclases superfamily. Dehydroquinate synthase family. Requires Co(2+) as cofactor. Zn(2+) is required as a cofactor. NAD(+) serves as cofactor.

The protein localises to the cytoplasm. It catalyses the reaction 7-phospho-2-dehydro-3-deoxy-D-arabino-heptonate = 3-dehydroquinate + phosphate. The protein operates within metabolic intermediate biosynthesis; chorismate biosynthesis; chorismate from D-erythrose 4-phosphate and phosphoenolpyruvate: step 2/7. Its function is as follows. Catalyzes the conversion of 3-deoxy-D-arabino-heptulosonate 7-phosphate (DAHP) to dehydroquinate (DHQ). In Campylobacter jejuni subsp. jejuni serotype O:23/36 (strain 81-176), this protein is 3-dehydroquinate synthase.